The following is a 306-amino-acid chain: tRNA pseudouridine synthase B (306 aa).

The active-site Nucleophile is Asp48.

It belongs to the pseudouridine synthase TruB family. Type 1 subfamily.

The catalysed reaction is uridine(55) in tRNA = pseudouridine(55) in tRNA. In terms of biological role, responsible for synthesis of pseudouridine from uracil-55 in the psi GC loop of transfer RNAs. This is tRNA pseudouridine synthase B from Haemophilus influenzae (strain 86-028NP).